An 82-amino-acid polypeptide reads, in one-letter code: Small ribosomal subunit protein bS16 (82 aa).

This sequence belongs to the bacterial ribosomal protein bS16 family.

The sequence is that of Small ribosomal subunit protein bS16 from Salmonella agona (strain SL483).